Reading from the N-terminus, the 216-residue chain is Ribosomal RNA large subunit methyltransferase E (216 aa).

Gly60, Trp62, Asp80, Asp96, and Asp121 together coordinate S-adenosyl-L-methionine. The active-site Proton acceptor is the Lys161.

It belongs to the class I-like SAM-binding methyltransferase superfamily. RNA methyltransferase RlmE family.

Its subcellular location is the cytoplasm. The catalysed reaction is uridine(2552) in 23S rRNA + S-adenosyl-L-methionine = 2'-O-methyluridine(2552) in 23S rRNA + S-adenosyl-L-homocysteine + H(+). In terms of biological role, specifically methylates the uridine in position 2552 of 23S rRNA at the 2'-O position of the ribose in the fully assembled 50S ribosomal subunit. The chain is Ribosomal RNA large subunit methyltransferase E from Pseudomonas syringae pv. syringae (strain B728a).